A 465-amino-acid chain; its full sequence is GTPase Der (465 aa).

EngA-type G domains lie at 3 to 167 (PLVA…PERS) and 179 to 352 (IHIA…VSAL). GTP is bound by residues 9–16 (GRPNVGKS), 57–61 (DTGGM), 119–122 (NKID), 185–192 (GRPNVGKS), 232–236 (DTAGL), and 297–300 (NKWD). In terms of domain architecture, KH-like spans 353–437 (RQFSTSEVNK…PVRFLFREGD (85 aa)).

It belongs to the TRAFAC class TrmE-Era-EngA-EngB-Septin-like GTPase superfamily. EngA (Der) GTPase family. Associates with the 50S ribosomal subunit.

GTPase that plays an essential role in the late steps of ribosome biogenesis. The sequence is that of GTPase Der from Xylella fastidiosa (strain M23).